We begin with the raw amino-acid sequence, 353 residues long: S-adenosylmethionine:tRNA ribosyltransferase-isomerase (353 aa).

Belongs to the QueA family. In terms of assembly, monomer.

The protein resides in the cytoplasm. The catalysed reaction is 7-aminomethyl-7-carbaguanosine(34) in tRNA + S-adenosyl-L-methionine = epoxyqueuosine(34) in tRNA + adenine + L-methionine + 2 H(+). It functions in the pathway tRNA modification; tRNA-queuosine biosynthesis. Transfers and isomerizes the ribose moiety from AdoMet to the 7-aminomethyl group of 7-deazaguanine (preQ1-tRNA) to give epoxyqueuosine (oQ-tRNA). This chain is S-adenosylmethionine:tRNA ribosyltransferase-isomerase, found in Rickettsia bellii (strain OSU 85-389).